The primary structure comprises 356 residues: Putative [LysW]-L-2-aminoadipate/[LysW]-L-glutamate phosphate reductase (356 aa).

An NADP(+)-binding site is contributed by 11–14; the sequence is SGYT. Cys-157 is an active-site residue. Position 323 (Asn-323) interacts with NADP(+).

Belongs to the NAGSA dehydrogenase family. Type 1 subfamily. LysY sub-subfamily.

The protein localises to the cytoplasm. It carries out the reaction [amino-group carrier protein]-C-terminal-N-(1-carboxy-5-oxopentan-1-yl)-L-glutamine + phosphate + NADP(+) = [amino-group carrier protein]-C-terminal-N-(1-carboxy-5-phosphooxy-5-oxopentan-1-yl)-L-glutamine + NADPH + H(+). The enzyme catalyses [amino-group carrier protein]-C-terminal-gamma-(L-glutamyl-5-semialdehyde)-L-glutamate + phosphate + NADP(+) = [amino-group carrier protein]-C-terminal-gamma-(5-phospho-L-glutamyl)-L-glutamate + NADPH + H(+). The protein operates within amino-acid biosynthesis; L-lysine biosynthesis via AAA pathway; L-lysine from L-alpha-aminoadipate (Thermus route): step 3/5. Its pathway is amino-acid biosynthesis; L-arginine biosynthesis. Functionally, involved in both the arginine and lysine biosynthetic pathways. This Ignicoccus hospitalis (strain KIN4/I / DSM 18386 / JCM 14125) protein is Putative [LysW]-L-2-aminoadipate/[LysW]-L-glutamate phosphate reductase.